Consider the following 359-residue polypeptide: Holliday junction branch migration complex subunit RuvB (359 aa).

The large ATPase domain (RuvB-L) stretch occupies residues 1 to 187 (MSGLEHGDAS…FGFTAHLEFY (187 aa)). ATP contacts are provided by residues Leu26, Arg27, Gly68, Lys71, Thr72, Thr73, 134-136 (EDY), Arg177, Tyr187, and Arg224. Thr72 contributes to the Mg(2+) binding site. A small ATPAse domain (RuvB-S) region spans residues 188–257 (ETHELEQVIE…SVRAALDLYD (70 aa)). The head domain (RuvB-H) stretch occupies residues 260-359 (PLGLDRLDRA…VAGALFGDEL (100 aa)). The DNA site is built by Arg315 and Arg320.

It belongs to the RuvB family. In terms of assembly, homohexamer. Forms an RuvA(8)-RuvB(12)-Holliday junction (HJ) complex. HJ DNA is sandwiched between 2 RuvA tetramers; dsDNA enters through RuvA and exits via RuvB. An RuvB hexamer assembles on each DNA strand where it exits the tetramer. Each RuvB hexamer is contacted by two RuvA subunits (via domain III) on 2 adjacent RuvB subunits; this complex drives branch migration. In the full resolvosome a probable DNA-RuvA(4)-RuvB(12)-RuvC(2) complex forms which resolves the HJ.

It is found in the cytoplasm. The catalysed reaction is ATP + H2O = ADP + phosphate + H(+). The RuvA-RuvB-RuvC complex processes Holliday junction (HJ) DNA during genetic recombination and DNA repair, while the RuvA-RuvB complex plays an important role in the rescue of blocked DNA replication forks via replication fork reversal (RFR). RuvA specifically binds to HJ cruciform DNA, conferring on it an open structure. The RuvB hexamer acts as an ATP-dependent pump, pulling dsDNA into and through the RuvAB complex. RuvB forms 2 homohexamers on either side of HJ DNA bound by 1 or 2 RuvA tetramers; 4 subunits per hexamer contact DNA at a time. Coordinated motions by a converter formed by DNA-disengaged RuvB subunits stimulates ATP hydrolysis and nucleotide exchange. Immobilization of the converter enables RuvB to convert the ATP-contained energy into a lever motion, pulling 2 nucleotides of DNA out of the RuvA tetramer per ATP hydrolyzed, thus driving DNA branch migration. The RuvB motors rotate together with the DNA substrate, which together with the progressing nucleotide cycle form the mechanistic basis for DNA recombination by continuous HJ branch migration. Branch migration allows RuvC to scan DNA until it finds its consensus sequence, where it cleaves and resolves cruciform DNA. This Clavibacter michiganensis subsp. michiganensis (strain NCPPB 382) protein is Holliday junction branch migration complex subunit RuvB.